We begin with the raw amino-acid sequence, 260 residues long: Hydroxyethylthiazole kinase (260 aa).

A substrate-binding site is contributed by Met36. Positions 112 and 157 each coordinate ATP. Position 184 (Gly184) interacts with substrate.

Belongs to the Thz kinase family. Mg(2+) is required as a cofactor.

The catalysed reaction is 5-(2-hydroxyethyl)-4-methylthiazole + ATP = 4-methyl-5-(2-phosphooxyethyl)-thiazole + ADP + H(+). The protein operates within cofactor biosynthesis; thiamine diphosphate biosynthesis; 4-methyl-5-(2-phosphoethyl)-thiazole from 5-(2-hydroxyethyl)-4-methylthiazole: step 1/1. Functionally, catalyzes the phosphorylation of the hydroxyl group of 4-methyl-5-beta-hydroxyethylthiazole (THZ). The protein is Hydroxyethylthiazole kinase of Shouchella clausii (strain KSM-K16) (Alkalihalobacillus clausii).